A 246-amino-acid polypeptide reads, in one-letter code: Probable transcriptional regulatory protein APP7_1210 (246 aa).

Belongs to the TACO1 family.

It localises to the cytoplasm. The sequence is that of Probable transcriptional regulatory protein APP7_1210 from Actinobacillus pleuropneumoniae serotype 7 (strain AP76).